The following is a 212-amino-acid chain: Ribonuclease HII (212 aa).

One can recognise an RNase H type-2 domain in the interval 24 to 212 (QLVAGVDEVG…PVKKALGIEE (189 aa)). D30, E31, and D122 together coordinate a divalent metal cation.

The protein belongs to the RNase HII family. Mn(2+) is required as a cofactor. It depends on Mg(2+) as a cofactor.

The protein resides in the cytoplasm. The catalysed reaction is Endonucleolytic cleavage to 5'-phosphomonoester.. Its function is as follows. Endonuclease that specifically degrades the RNA of RNA-DNA hybrids. The protein is Ribonuclease HII of Vibrio campbellii (strain ATCC BAA-1116).